The chain runs to 99 residues: uncharacterized protein (99 aa).

Residues 43 to 95 (ENEEIYADQVRRIKLRLRELRETYATSEDNWRELMDNLEELRDQIERLAIRGG) adopt a coiled-coil conformation.

This is an uncharacterized protein from Archaeoglobus fulgidus (strain ATCC 49558 / DSM 4304 / JCM 9628 / NBRC 100126 / VC-16).